The chain runs to 314 residues: Olfactory receptor 5B17 (314 aa).

At 1 to 23 (MENNTEVSEFILLGLTNAPELQV) the chain is on the extracellular side. An N-linked (GlcNAc...) asparagine glycan is attached at Asn3. The chain crosses the membrane as a helical span at residues 24-44 (PLFIMFTLIYLITLTGNLGMI). Residues 45-52 (ILILLDSH) are Cytoplasmic-facing. Residues 53–73 (LHTPMYFFLSNLSLAGIGYSS) traverse the membrane as a helical segment. The Extracellular portion of the chain corresponds to 74–97 (AVTPKVLTGLLIEDKAISYSACAA). Cys95 and Cys187 form a disulfide bridge. A helical membrane pass occupies residues 98-118 (QMFFCAVFATVENYLLSSMAY). Over 119-137 (DRYAAVCNPLHYTTTMTTR) the chain is Cytoplasmic. A helical transmembrane segment spans residues 138 to 158 (VCACLAIGCYVIGFLNASIQI). Residues 159–194 (GDTFRLSFCMSNVIHHFFCDKPAVITLTCSEKHISE) lie on the Extracellular side of the membrane. A helical transmembrane segment spans residues 195–215 (LILVLISSFNVFFALLVTLIS). Over 216–235 (YLFILITILKRHTGKGYQKP) the chain is Cytoplasmic. Residues 236–256 (LSTCGSHLIAIFLFYITVIIM) traverse the membrane as a helical segment. The Extracellular portion of the chain corresponds to 257–269 (YIRPSSSHSMDTD). A helical membrane pass occupies residues 270-290 (KIASVFYTMIIPMLSPIVYTL). Topologically, residues 291 to 314 (RNKDVKNAFMKVVEKAKYSLDSVF) are cytoplasmic.

Belongs to the G-protein coupled receptor 1 family.

Its subcellular location is the cell membrane. In terms of biological role, odorant receptor. The protein is Olfactory receptor 5B17 (OR5B17) of Homo sapiens (Human).